The sequence spans 129 residues: Sigma factor-binding protein Crl (129 aa).

Positions 99–119 (TQNCFHLKLVKTLEENFQLSV) are essential for activity.

Belongs to the Crl family.

Its subcellular location is the cytoplasm. In terms of biological role, binds to the sigma-S subunit of RNA polymerase, activating expression of sigma-S-regulated genes. Stimulates RNA polymerase holoenzyme formation and may bind to several other sigma factors, such as sigma-70 and sigma-32. The polypeptide is Sigma factor-binding protein Crl (Vibrio vulnificus (strain CMCP6)).